A 139-amino-acid chain; its full sequence is Large ribosomal subunit protein uL16 (139 aa).

Over residues 1–20 (MLIPRRVKHRKQHHPKRRGM) the composition is skewed to basic residues. The disordered stretch occupies residues 1 to 22 (MLIPRRVKHRKQHHPKRRGMAK).

The protein belongs to the universal ribosomal protein uL16 family. Part of the 50S ribosomal subunit.

Binds 23S rRNA and is also seen to make contacts with the A and possibly P site tRNAs. The polypeptide is Large ribosomal subunit protein uL16 (Streptomyces coelicolor (strain ATCC BAA-471 / A3(2) / M145)).